A 30-amino-acid chain; its full sequence is Babycurus-toxin 1 (30 aa).

The 29-residue stretch at 2–30 (KDGYPTNSKGCKISGCLPGENKFCLNECQ) folds into the LCN-type CS-alpha/beta domain.

The protein belongs to the long (4 C-C) scorpion toxin superfamily. Sodium channel inhibitor family. Expressed by the venom gland.

The protein resides in the secreted. Functionally, binds to sodium channels (Nav) and inhibits both the activation and inactivation of the activated channels, thereby blocking neuronal transmission. The polypeptide is Babycurus-toxin 1 (Babycurus centrurimorphus (East African scorpion)).